Here is a 184-residue protein sequence, read N- to C-terminus: ATP synthase subunit delta (184 aa).

It belongs to the ATPase delta chain family. F-type ATPases have 2 components, F(1) - the catalytic core - and F(0) - the membrane proton channel. F(1) has five subunits: alpha(3), beta(3), gamma(1), delta(1), epsilon(1). F(0) has three main subunits: a(1), b(2) and c(10-14). The alpha and beta chains form an alternating ring which encloses part of the gamma chain. F(1) is attached to F(0) by a central stalk formed by the gamma and epsilon chains, while a peripheral stalk is formed by the delta and b chains.

It localises to the cell inner membrane. F(1)F(0) ATP synthase produces ATP from ADP in the presence of a proton or sodium gradient. F-type ATPases consist of two structural domains, F(1) containing the extramembraneous catalytic core and F(0) containing the membrane proton channel, linked together by a central stalk and a peripheral stalk. During catalysis, ATP synthesis in the catalytic domain of F(1) is coupled via a rotary mechanism of the central stalk subunits to proton translocation. In terms of biological role, this protein is part of the stalk that links CF(0) to CF(1). It either transmits conformational changes from CF(0) to CF(1) or is implicated in proton conduction. The protein is ATP synthase subunit delta of Rickettsia felis (strain ATCC VR-1525 / URRWXCal2) (Rickettsia azadi).